We begin with the raw amino-acid sequence, 72 residues long: Translation initiation factor IF-1 (72 aa).

One can recognise an S1-like domain in the interval 1–72 (MAKDDVIEVD…DKGRITYRHK (72 aa)).

Belongs to the IF-1 family. In terms of assembly, component of the 30S ribosomal translation pre-initiation complex which assembles on the 30S ribosome in the order IF-2 and IF-3, IF-1 and N-formylmethionyl-tRNA(fMet); mRNA recruitment can occur at any time during PIC assembly.

Its subcellular location is the cytoplasm. Its function is as follows. One of the essential components for the initiation of protein synthesis. Stabilizes the binding of IF-2 and IF-3 on the 30S subunit to which N-formylmethionyl-tRNA(fMet) subsequently binds. Helps modulate mRNA selection, yielding the 30S pre-initiation complex (PIC). Upon addition of the 50S ribosomal subunit IF-1, IF-2 and IF-3 are released leaving the mature 70S translation initiation complex. This chain is Translation initiation factor IF-1, found in Helicobacter hepaticus (strain ATCC 51449 / 3B1).